Consider the following 389-residue polypeptide: MRLVKKNVVINGIYEAGVRYPEPANISYLWNFGFFSLICLIIQLVSGILLAMHYSAHVDLAFNSIERLVREVDYGWLLRYIHANGASFFFIVVYIHMLRGLYFGSYQKPNAMLWVSGVVIFLLLIITGFLGYVLPWGQMSYWAATVITNLVTVLPVIGEDIVIWLWGGFNVDNPTLNRFFSLHYLCPFIIVGLVGLHIIFLRENGSTNPLGVKSHVDQIPFTPYFTIKDLFSFMIFLVLFFTFVFFAPNYLGHPDNYLMADSNVTPAHIVPEWYLLPFYAMLRSIPNKVLGVLALVLAIVVLAFLPFLTIAEVRSSYFRKIHKHLFWSFLALCFFLGFLGSQPAAAPYLICGLYSTIAYFIYILVLFPCIYIVEKMIIKTIMKTTVKKA.

Helical transmembrane passes span 32-52 (FGFF…LLAM), 76-98 (WLLR…IHML), 113-133 (LWVS…LGYV), 179-199 (FFSL…LHII), 225-245 (FTIK…TFVF), 290-310 (LGVL…FLTI), 325-345 (LFWS…QPAA), and 353-373 (LYST…IYIV). Residues His-82 and His-96 each coordinate heme b. His-183 and His-197 together coordinate heme b.

It belongs to the cytochrome b family. As to quaternary structure, the main subunits of complex b-c1 are: cytochrome b, cytochrome c1 and the Rieske protein. Heme b serves as cofactor.

The protein resides in the mitochondrion inner membrane. Component of the ubiquinol-cytochrome c reductase complex (complex III or cytochrome b-c1 complex) that is part of the mitochondrial respiratory chain. The b-c1 complex mediates electron transfer from ubiquinol to cytochrome c. Contributes to the generation of a proton gradient across the mitochondrial membrane that is then used for ATP synthesis. This is Cytochrome b (cytB) from Dictyostelium discoideum (Social amoeba).